The chain runs to 228 residues: THAP domain-containing protein 2 (228 aa).

The THAP-type zinc-finger motif lies at 1-80 (MPTNCAAAGC…LKMDAVPTIF (80 aa)). Positions 123 to 126 (EHSY) match the HCFC1-binding motif (HBM) motif.

This Homo sapiens (Human) protein is THAP domain-containing protein 2 (THAP2).